We begin with the raw amino-acid sequence, 141 residues long: uncharacterized protein (141 aa).

This is an uncharacterized protein from Borreliella burgdorferi (strain ATCC 35210 / DSM 4680 / CIP 102532 / B31) (Borrelia burgdorferi).